A 204-amino-acid polypeptide reads, in one-letter code: Somatotropin (204 aa).

An N-terminal signal peptide occupies residues 1–17; it reads MDRVVLLLSVLSLGVSS. Gln-18 is modified (pyrrolidone carboxylic acid). 2 disulfides stabilise this stretch: Cys-69–Cys-177 and Cys-194–Cys-202.

The protein belongs to the somatotropin/prolactin family.

It is found in the secreted. Its function is as follows. Growth hormone plays an important role in growth control and is involved in the regulation of several anabolic processes. Implicated as an osmoregulatory substance important for seawater adaptation. This Seriola quinqueradiata (Five-ray yellowtail) protein is Somatotropin (gh).